An 891-amino-acid polypeptide reads, in one-letter code: Echinoderm microtubule-associated protein-like elp-1 (891 aa).

The span at 77–88 (DQSRSPTCSGYS) shows a compositional bias: polar residues. A disordered region spans residues 77–167 (DQSRSPTCSG…ARGSPMRKWV (91 aa)). A compositionally biased stretch (low complexity) spans 104–117 (SPSHAPPRSSHANS). A compositionally biased stretch (polar residues) spans 118-131 (KSLYINGMNNNSEE). 9 WD repeats span residues 330–401 (GHTC…TLMV), 404–447 (GFEK…REGE), 499–537 (DKPK…TTKQ), 541–579 (VHPG…RTRR), 626–664 (GDPG…VEFS), 708–747 (EGTA…NLLV), 753–792 (HIPA…CDGT), 816–853 (SSNG…VTAG), and 859–890 (GHGR…EWCL).

Belongs to the WD repeat EMAP family.

Its subcellular location is the cytoplasm. It is found in the cytoskeleton. May modify the assembly dynamics of microtubules, such that microtubules are slightly longer, but more dynamic. The polypeptide is Echinoderm microtubule-associated protein-like elp-1 (elp-1) (Caenorhabditis elegans).